Consider the following 125-residue polypeptide: Putative iron-sulfur cluster insertion protein ErpA 2 (125 aa).

Iron-sulfur cluster is bound by residues C53, C117, and C119.

It belongs to the HesB/IscA family. As to quaternary structure, homodimer. It depends on iron-sulfur cluster as a cofactor.

In terms of biological role, required for insertion of 4Fe-4S clusters. The protein is Putative iron-sulfur cluster insertion protein ErpA 2 of Polaromonas naphthalenivorans (strain CJ2).